Here is a 547-residue protein sequence, read N- to C-terminus: Golgi pH regulator homolog (547 aa).

The next 5 membrane-spanning stretches (helical) occupy residues 56 to 76 (TIAV…FYFL), 92 to 112 (LSFS…FFEI), 134 to 154 (INLI…AYGF), 164 to 184 (LVLL…FPIL), and 200 to 220 (IGIV…VYVP). Positions 268-305 (NVNNNNNNNNNYDTYNYNNNYNNNSNNNNNNNNSNNNN) are disordered. Residues Asn290 and Asn299 are each glycosylated (N-linked (GlcNAc...) asparagine). Transmembrane regions (helical) follow at residues 427 to 447 (VTFW…ASSI), 469 to 489 (NIVL…VLMM), and 517 to 537 (WFDF…IFMS).

This sequence belongs to the Golgi pH regulator (TC 1.A.38) family.

It localises to the membrane. The chain is Golgi pH regulator homolog (gpr89) from Dictyostelium discoideum (Social amoeba).